A 901-amino-acid chain; its full sequence is Protein translocase subunit SecA (901 aa).

Residues glutamine 87, 105–109 (GEGKT), and aspartate 512 contribute to the ATP site. Residues cysteine 885, cysteine 887, cysteine 896, and histidine 897 each coordinate Zn(2+).

Belongs to the SecA family. In terms of assembly, monomer and homodimer. Part of the essential Sec protein translocation apparatus which comprises SecA, SecYEG and auxiliary proteins SecDF-YajC and YidC. Requires Zn(2+) as cofactor.

It is found in the cell inner membrane. The protein resides in the cytoplasm. The enzyme catalyses ATP + H2O + cellular proteinSide 1 = ADP + phosphate + cellular proteinSide 2.. Its function is as follows. Part of the Sec protein translocase complex. Interacts with the SecYEG preprotein conducting channel. Has a central role in coupling the hydrolysis of ATP to the transfer of proteins into and across the cell membrane, serving both as a receptor for the preprotein-SecB complex and as an ATP-driven molecular motor driving the stepwise translocation of polypeptide chains across the membrane. The sequence is that of Protein translocase subunit SecA from Salmonella paratyphi B (strain ATCC BAA-1250 / SPB7).